The primary structure comprises 225 residues: uncharacterized protein (225 aa).

E69, E71, and D100 together coordinate a divalent metal cation.

It belongs to the FAH family.

This is an uncharacterized protein from Pyrococcus abyssi (strain GE5 / Orsay).